The primary structure comprises 182 residues: UPF0316 protein lp_1140 (182 aa).

The next 3 helical transmembrane spans lie at 1-21 (MHIDMGMLVLIFIINFAYITL), 36-56 (FAAFASVIEITIYVLGLSLVL), and 62-82 (PINLVVYALGYGVGVYVGMVI).

Belongs to the UPF0316 family.

It is found in the cell membrane. This Lactiplantibacillus plantarum (strain ATCC BAA-793 / NCIMB 8826 / WCFS1) (Lactobacillus plantarum) protein is UPF0316 protein lp_1140.